Here is a 302-residue protein sequence, read N- to C-terminus: CASP-like protein 4A2 (302 aa).

The span at 1–13 (MALQAQQQATPSP) shows a compositional bias: polar residues. The segment at 1–134 (MALQAQQQAT…APPPHAQVRS (134 aa)) is disordered. Topologically, residues 1-154 (MALQAQQQAT…RKRRAAVMQR (154 aa)) are cytoplasmic. Low complexity predominate over residues 40–60 (VVVASTHHAAAAARYVPPRAT). Residues 99 to 129 (KTPPPAPPLPAAPPPPPAASPAPAPRAPPPH) are compositionally biased toward pro residues. The chain crosses the membrane as a helical span at residues 155–175 (AALLARAAAAGLCLAALAVLA). The Extracellular segment spans residues 176-197 (SDTRRGWARDSYSNYAQFRYSE). Residues 198–218 (AVNVVGFLYSVFQFVALAELM) form a helical membrane-spanning segment. Over 219 to 238 (RRNKHLIPHPKRDLFDFTMD) the chain is Cytoplasmic. The helical transmembrane segment at 239–256 (QVVAYLLISSSSSATARA) threads the bilayer. The Extracellular portion of the chain corresponds to 257–273 (SDLIENWGSDSFPSMAN). A helical membrane pass occupies residues 274 to 294 (GSIAISFVAFVVFAICSLISA). Residues 295 to 302 (YNLFRRDM) are Cytoplasmic-facing.

It belongs to the Casparian strip membrane proteins (CASP) family. As to quaternary structure, homodimer and heterodimers.

The protein localises to the cell membrane. The sequence is that of CASP-like protein 4A2 from Zea mays (Maize).